Consider the following 1022-residue polypeptide: Dihydropyrimidine dehydrogenase [NADP(+)] (1022 aa).

The tract at residues 26 to 45 is disordered; it reads ANVHSTASKKNEKKHWKRNP. In terms of domain architecture, 4Fe-4S ferredoxin-type 1 spans 69-100; it reads ERGALREALRCLKCADAPCQKSCPTNLDIKSF. Cysteine 79, cysteine 82, cysteine 87, and cysteine 91 together coordinate [4Fe-4S] cluster. Valine 129 contacts FAD. Cysteine 130, cysteine 136, cysteine 140, and glutamine 156 together coordinate [4Fe-4S] cluster. FAD-binding positions include 194 to 198, 218 to 226, arginine 235, and leucine 261; these read GCGPA and EKQKYIGGL. NADP(+)-binding positions include 340-343, 364-365, arginine 371, 437-439, and 481-487; these read AGDT, RK, AFG, and DIAGFAN. An FAD-binding site is contributed by 480–489; it reads GDIAGFANTT. FMN contacts are provided by residues serine 550 and 574-575; that span reads KT. Substrate is bound by residues asparagine 609 and 668-670; that span reads NLS. The active-site Proton acceptor is the cysteine 671. Lysine 709 contacts FMN. 736–737 contacts substrate; it reads NT. FMN is bound by residues glycine 767, 793-795, and 816-817; these read TGG and CS. 2 4Fe-4S ferredoxin-type domains span residues 943–975 and 976–1006; these read VQAL…FDPE and THLP…MVSR. 8 residues coordinate [4Fe-4S] cluster: cysteine 952, cysteine 955, cysteine 958, cysteine 962, cysteine 985, cysteine 988, cysteine 991, and cysteine 995.

Belongs to the dihydropyrimidine dehydrogenase family. In terms of assembly, homodimer. FAD is required as a cofactor. It depends on FMN as a cofactor. [4Fe-4S] cluster serves as cofactor.

The protein resides in the cytoplasm. The enzyme catalyses 5,6-dihydrouracil + NADP(+) = uracil + NADPH + H(+). The catalysed reaction is 5,6-dihydrothymine + NADP(+) = thymine + NADPH + H(+). The protein operates within amino-acid biosynthesis; beta-alanine biosynthesis. In terms of biological role, involved in pyrimidine base degradation. Catalyzes the reduction of uracil and thymine. Also involved the degradation of the chemotherapeutic drug 5-fluorouracil. In Danio rerio (Zebrafish), this protein is Dihydropyrimidine dehydrogenase [NADP(+)] (dpyd).